Here is a 160-residue protein sequence, read N- to C-terminus: MNIIQSGITAENSSIAIIIARFNEFINKNLLLGALDTLKRIGQVHEENILKIYVPGTYEIPTIASYIAKSGKYDAIIAIGTIIKGQTDHFKYIANDTSSSLSRISTQYFLPITLGILTTKNIEQSIERSGTKMGNKGSDAALAALEMINVMKKLKKVIYY.

5-amino-6-(D-ribitylamino)uracil-binding positions include phenylalanine 22, 57 to 59, and 81 to 83; these read TYE and TII. 86–87 is a binding site for (2S)-2-hydroxy-3-oxobutyl phosphate; sequence QT. Histidine 89 (proton donor) is an active-site residue. Leucine 114 provides a ligand contact to 5-amino-6-(D-ribitylamino)uracil. Arginine 128 contacts (2S)-2-hydroxy-3-oxobutyl phosphate.

The protein belongs to the DMRL synthase family. Forms an icosahedral capsid composed of 60 subunits, arranged as a dodecamer of pentamers.

It catalyses the reaction (2S)-2-hydroxy-3-oxobutyl phosphate + 5-amino-6-(D-ribitylamino)uracil = 6,7-dimethyl-8-(1-D-ribityl)lumazine + phosphate + 2 H2O + H(+). It participates in cofactor biosynthesis; riboflavin biosynthesis; riboflavin from 2-hydroxy-3-oxobutyl phosphate and 5-amino-6-(D-ribitylamino)uracil: step 1/2. In terms of biological role, catalyzes the formation of 6,7-dimethyl-8-ribityllumazine by condensation of 5-amino-6-(D-ribitylamino)uracil with 3,4-dihydroxy-2-butanone 4-phosphate. This is the penultimate step in the biosynthesis of riboflavin. In Buchnera aphidicola subsp. Acyrthosiphon pisum (strain Tuc7), this protein is 6,7-dimethyl-8-ribityllumazine synthase.